We begin with the raw amino-acid sequence, 955 residues long: 2-oxoglutarate dehydrogenase E1 component (955 aa).

This sequence belongs to the alpha-ketoglutarate dehydrogenase family. In terms of assembly, homodimer. Part of the 2-oxoglutarate dehydrogenase (OGDH) complex composed of E1 (2-oxoglutarate dehydrogenase), E2 (dihydrolipoamide succinyltransferase) and E3 (dihydrolipoamide dehydrogenase); the complex contains multiple copies of the three enzymatic components (E1, E2 and E3). It depends on thiamine diphosphate as a cofactor.

The catalysed reaction is N(6)-[(R)-lipoyl]-L-lysyl-[protein] + 2-oxoglutarate + H(+) = N(6)-[(R)-S(8)-succinyldihydrolipoyl]-L-lysyl-[protein] + CO2. Its function is as follows. E1 component of the 2-oxoglutarate dehydrogenase (OGDH) complex which catalyzes the decarboxylation of 2-oxoglutarate, the first step in the conversion of 2-oxoglutarate to succinyl-CoA and CO(2). This is 2-oxoglutarate dehydrogenase E1 component from Bacillus anthracis (strain A0248).